A 388-amino-acid chain; its full sequence is Alanine racemase (388 aa).

Lysine 44 acts as the Proton acceptor; specific for D-alanine in catalysis. Position 44 is an N6-(pyridoxal phosphate)lysine (lysine 44). Substrate is bound at residue arginine 142. Tyrosine 273 serves as the catalytic Proton acceptor; specific for L-alanine. Residue methionine 321 coordinates substrate.

It belongs to the alanine racemase family. Requires pyridoxal 5'-phosphate as cofactor.

It catalyses the reaction L-alanine = D-alanine. It participates in amino-acid biosynthesis; D-alanine biosynthesis; D-alanine from L-alanine: step 1/1. In terms of biological role, catalyzes the interconversion of L-alanine and D-alanine. May also act on other amino acids. In Mycobacterium avium (strain 104), this protein is Alanine racemase (alr).